The primary structure comprises 177 residues: ATP synthase subunit delta (177 aa).

The protein belongs to the ATPase delta chain family. F-type ATPases have 2 components, F(1) - the catalytic core - and F(0) - the membrane proton channel. F(1) has five subunits: alpha(3), beta(3), gamma(1), delta(1), epsilon(1). F(0) has three main subunits: a(1), b(2) and c(10-14). The alpha and beta chains form an alternating ring which encloses part of the gamma chain. F(1) is attached to F(0) by a central stalk formed by the gamma and epsilon chains, while a peripheral stalk is formed by the delta and b chains.

It is found in the cell inner membrane. In terms of biological role, f(1)F(0) ATP synthase produces ATP from ADP in the presence of a proton or sodium gradient. F-type ATPases consist of two structural domains, F(1) containing the extramembraneous catalytic core and F(0) containing the membrane proton channel, linked together by a central stalk and a peripheral stalk. During catalysis, ATP synthesis in the catalytic domain of F(1) is coupled via a rotary mechanism of the central stalk subunits to proton translocation. Functionally, this protein is part of the stalk that links CF(0) to CF(1). It either transmits conformational changes from CF(0) to CF(1) or is implicated in proton conduction. The sequence is that of ATP synthase subunit delta from Shewanella pealeana (strain ATCC 700345 / ANG-SQ1).